The following is a 327-amino-acid chain: Malate dehydrogenase (327 aa).

12 to 18 contacts NAD(+); it reads GAAGQIG. Substrate contacts are provided by arginine 93 and arginine 99. NAD(+) is bound by residues asparagine 106, glutamine 113, and 130–132; that span reads VGN. Residues asparagine 132 and arginine 163 each coordinate substrate. Histidine 188 functions as the Proton acceptor in the catalytic mechanism.

Belongs to the LDH/MDH superfamily. MDH type 2 family.

It catalyses the reaction (S)-malate + NAD(+) = oxaloacetate + NADH + H(+). Functionally, catalyzes the reversible oxidation of malate to oxaloacetate. This chain is Malate dehydrogenase, found in Cupriavidus metallidurans (strain ATCC 43123 / DSM 2839 / NBRC 102507 / CH34) (Ralstonia metallidurans).